Here is a 163-residue protein sequence, read N- to C-terminus: Probable chemoreceptor glutamine deamidase CheD (163 aa).

It belongs to the CheD family.

The catalysed reaction is L-glutaminyl-[protein] + H2O = L-glutamyl-[protein] + NH4(+). Its function is as follows. Probably deamidates glutamine residues to glutamate on methyl-accepting chemotaxis receptors (MCPs), playing an important role in chemotaxis. This is Probable chemoreceptor glutamine deamidase CheD from Borreliella afzelii (strain PKo) (Borrelia afzelii).